The following is a 339-amino-acid chain: Ribosomal RNA small subunit methyltransferase C (339 aa).

The protein belongs to the methyltransferase superfamily. RsmC family. In terms of assembly, monomer.

The protein resides in the cytoplasm. The enzyme catalyses guanosine(1207) in 16S rRNA + S-adenosyl-L-methionine = N(2)-methylguanosine(1207) in 16S rRNA + S-adenosyl-L-homocysteine + H(+). In terms of biological role, specifically methylates the guanine in position 1207 of 16S rRNA in the 30S particle. This Aliivibrio salmonicida (strain LFI1238) (Vibrio salmonicida (strain LFI1238)) protein is Ribosomal RNA small subunit methyltransferase C.